Reading from the N-terminus, the 457-residue chain is V-type ATP synthase beta chain (457 aa).

This sequence belongs to the ATPase alpha/beta chains family.

Produces ATP from ADP in the presence of a proton gradient across the membrane. The V-type beta chain is a regulatory subunit. This Clostridioides difficile (strain 630) (Peptoclostridium difficile) protein is V-type ATP synthase beta chain.